The primary structure comprises 367 residues: 3-dehydroquinate synthase (367 aa).

Residues 108–112 (GVIGD), 132–133 (TT), lysine 145, and lysine 154 contribute to the NAD(+) site. Positions 187, 249, and 267 each coordinate Zn(2+).

The protein belongs to the sugar phosphate cyclases superfamily. Dehydroquinate synthase family. Requires Co(2+) as cofactor. Zn(2+) is required as a cofactor. NAD(+) serves as cofactor.

It is found in the cytoplasm. The catalysed reaction is 7-phospho-2-dehydro-3-deoxy-D-arabino-heptonate = 3-dehydroquinate + phosphate. It participates in metabolic intermediate biosynthesis; chorismate biosynthesis; chorismate from D-erythrose 4-phosphate and phosphoenolpyruvate: step 2/7. In terms of biological role, catalyzes the conversion of 3-deoxy-D-arabino-heptulosonate 7-phosphate (DAHP) to dehydroquinate (DHQ). The protein is 3-dehydroquinate synthase of Paracoccus denitrificans (strain Pd 1222).